Reading from the N-terminus, the 880-residue chain is DNA-directed RNA polymerase subunit beta C-terminal section (880 aa).

The protein belongs to the RNA polymerase beta chain family. In terms of assembly, in plastids the minimal PEP RNA polymerase catalytic core is composed of four subunits: alpha, beta, beta', and beta''. When a (nuclear-encoded) sigma factor is associated with the core the holoenzyme is formed, which can initiate transcription.

The protein resides in the plastid. Its subcellular location is the chloroplast. The catalysed reaction is RNA(n) + a ribonucleoside 5'-triphosphate = RNA(n+1) + diphosphate. In terms of biological role, DNA-dependent RNA polymerase catalyzes the transcription of DNA into RNA using the four ribonucleoside triphosphates as substrates. The sequence is that of DNA-directed RNA polymerase subunit beta C-terminal section (rpoB2) from Pleurastrum terricola (Filamentous green alga).